A 494-amino-acid chain; its full sequence is UDP-glucose 6-dehydrogenase (494 aa).

Residues 11 to 16 (GAGYVG), Asp36, Arg41, and 89 to 93 (VNTPT) each bind NAD(+). Residues 88–110 (SVNTPTKTYGMGKGRAADLKYIE) are disordered. Lys107 is modified (N6-acetyllysine). The interval 129 to 135 (KSTVPVR) is allosteric switch region. 130-132 (STV) lines the NAD(+) pocket. The active-site Proton donor/acceptor is the Glu161. Residues 161–165 (EFLAE), 220–224 (KLTAN), Arg260, and 267–273 (KASVGFG) each bind substrate. Glu165 lines the NAD(+) pocket. Lys220 acts as the Proton donor/acceptor in catalysis. Cys276 acts as the Nucleophile in catalysis. 276 to 279 (CFQK) contacts NAD(+). Residues 321 to 325 (SLFNT) form an important for formation of active hexamer structure region. 338–339 (FK) is a substrate binding site. Arg346 is a binding site for NAD(+). Position 442 (Arg442) interacts with substrate. The disordered stretch occupies residues 466–494 (VSSKRIPYAPSGEIPKFSLQDMPNKKPRV). At Ser476 the chain carries Phosphoserine.

It belongs to the UDP-glucose/GDP-mannose dehydrogenase family. Homohexamer.

The catalysed reaction is UDP-alpha-D-glucose + 2 NAD(+) + H2O = UDP-alpha-D-glucuronate + 2 NADH + 3 H(+). It participates in nucleotide-sugar biosynthesis; UDP-alpha-D-glucuronate biosynthesis; UDP-alpha-D-glucuronate from UDP-alpha-D-glucose: step 1/1. UDP-alpha-D-xylose (UDX) acts as a feedback inhibitor. It binds at the same site as the substrate, but functions as allosteric inhibitor by triggering a conformation change that disrupts the active hexameric ring structure and gives rise to an inactive, horseshoe-shaped hexamer. In terms of biological role, catalyzes the formation of UDP-alpha-D-glucuronate, a constituent of complex glycosaminoglycans. Required for the biosynthesis of chondroitin sulfate and heparan sulfate. Required for embryonic development via its role in the biosynthesis of glycosaminoglycans. Required for proper brain and neuronal development. This Bos taurus (Bovine) protein is UDP-glucose 6-dehydrogenase (UGDH).